The sequence spans 147 residues: Protein Turandot Z (147 aa).

Residues 1–23 (MYFAIRLSFVLAVLICLTGNGSA) form the signal peptide.

Belongs to the Turandot family.

The protein resides in the secreted. A humoral factor that may play a role in stress tolerance. The sequence is that of Protein Turandot Z from Drosophila melanogaster (Fruit fly).